Reading from the N-terminus, the 459-residue chain is Ribulose bisphosphate carboxylase large chain (459 aa).

Residue Lys4 is modified to N6,N6,N6-trimethyllysine. Asn113 and Thr163 together coordinate substrate. The Proton acceptor role is filled by Lys165. Residue Lys167 participates in substrate binding. Mg(2+)-binding residues include Lys191, Asp193, and Glu194. N6-carboxylysine is present on Lys191. His284 functions as the Proton acceptor in the catalytic mechanism. Residues Arg285, His317, and Ser369 each coordinate substrate.

This sequence belongs to the RuBisCO large chain family. Type I subfamily. Heterohexadecamer of 8 large chains and 8 small chains; disulfide-linked. The disulfide link is formed within the large subunit homodimers. The cofactor is Mg(2+). The disulfide bond which can form in the large chain dimeric partners within the hexadecamer appears to be associated with oxidative stress and protein turnover.

The protein localises to the plastid. It localises to the chloroplast. It carries out the reaction 2 (2R)-3-phosphoglycerate + 2 H(+) = D-ribulose 1,5-bisphosphate + CO2 + H2O. It catalyses the reaction D-ribulose 1,5-bisphosphate + O2 = 2-phosphoglycolate + (2R)-3-phosphoglycerate + 2 H(+). In terms of biological role, ruBisCO catalyzes two reactions: the carboxylation of D-ribulose 1,5-bisphosphate, the primary event in carbon dioxide fixation, as well as the oxidative fragmentation of the pentose substrate in the photorespiration process. Both reactions occur simultaneously and in competition at the same active site. This is Ribulose bisphosphate carboxylase large chain from Apium graveolens (Celery).